Here is a 480-residue protein sequence, read N- to C-terminus: Glutamyl-tRNA(Gln) amidotransferase subunit A (480 aa).

Active-site charge relay system residues include Lys74 and Ser149. The active-site Acyl-ester intermediate is Ser173.

The protein belongs to the amidase family. GatA subfamily. In terms of assembly, heterotrimer of A, B and C subunits.

It carries out the reaction L-glutamyl-tRNA(Gln) + L-glutamine + ATP + H2O = L-glutaminyl-tRNA(Gln) + L-glutamate + ADP + phosphate + H(+). Functionally, allows the formation of correctly charged Gln-tRNA(Gln) through the transamidation of misacylated Glu-tRNA(Gln) in organisms which lack glutaminyl-tRNA synthetase. The reaction takes place in the presence of glutamine and ATP through an activated gamma-phospho-Glu-tRNA(Gln). In Ruthia magnifica subsp. Calyptogena magnifica, this protein is Glutamyl-tRNA(Gln) amidotransferase subunit A.